The chain runs to 354 residues: Guanine nucleotide-binding protein subunit alpha-14 (354 aa).

The G-alpha domain maps to 33–354; that stretch reads RELKLLLLGT…QLNLREFNLV (322 aa). Residues 36-49 are G1 motif; the sequence is KLLLLGTGESGKST. GTP is bound by residues 41 to 48, 175 to 181, 200 to 204, 269 to 272, and alanine 326; these read GTGESGKS, LRVRVPT, DVGGQ, and NKKD. Residues serine 48 and threonine 181 each coordinate Mg(2+). Residues 173–181 are G2 motif; it reads DVLRVRVPT. The G3 motif stretch occupies residues 196-205; the sequence is FRMVDVGGQR. The segment at 265–272 is G4 motif; that stretch reads ILFLNKKD. The tract at residues 324 to 329 is G5 motif; that stretch reads TCATDT.

This sequence belongs to the G-alpha family. G(q) subfamily. As to quaternary structure, g proteins are composed of 3 units; alpha, beta and gamma. The alpha chain contains the guanine nucleotide binding site.

In terms of biological role, guanine nucleotide-binding proteins (G proteins) are involved as modulators or transducers in various transmembrane signaling systems. Acts as an activator of phospholipase C. Mediates responses to trypsin. This chain is Guanine nucleotide-binding protein subunit alpha-14 (gna14), found in Xenopus laevis (African clawed frog).